Reading from the N-terminus, the 354-residue chain is MKPSPQFLLAAFLSLILQTGICYGIKWIALSKTPSALALNQTQHCKQLEGLVVSQVQLCRSNLELMQTIIQAAREVIKTCRKTFSDMRWNCSSIELAPNYLLDLERGTRESAFVYALSAAAISHTIARACTTGDLPGCSCGPIPGETPGPGYRWGGCADNLNYGLIMGSKFSDAPMKMKKSGSQANKLMHLHNSEVGRQVLKASLEMKCKCHGVSGSCSIKTCWKGLQELRDIALDLKNKYLSATKVVHRPMGTRKYLVPKDIDIRPVKETELIYLQSSPDFCMKNEKVGSHGTQDRQCNKTSNGSDSCDLMCCGRGYNPYMDKVVERCHCKYHWCCYVTCKKCERTVERYVCK.

The signal sequence occupies residues 1 to 24; it reads MKPSPQFLLAAFLSLILQTGICYG. N40 and N90 each carry an N-linked (GlcNAc...) asparagine glycan. Cystine bridges form between C80–C91, C130–C138, C140–C157, C209–C223, C211–C218, C283–C314, C299–C309, C313–C353, C329–C344, C331–C341, and C336–C337. A lipid anchor (O-palmitoleoyl serine; by PORCN) is attached at S215. Residues N300 and N304 are each glycosylated (N-linked (GlcNAc...) asparagine).

It belongs to the Wnt family. Palmitoleoylation is required for efficient binding to frizzled receptors. Depalmitoleoylation leads to Wnt signaling pathway inhibition.

Its subcellular location is the secreted. The protein localises to the extracellular space. It localises to the extracellular matrix. Its function is as follows. Ligand for members of the frizzled family of seven transmembrane receptors. May play a role in the formation of dermal structure, both limb and feather buds. Is likely to signal over only few cell diameters. The protein is Protein Wnt-11 (WNT11) of Coturnix japonica (Japanese quail).